A 366-amino-acid polypeptide reads, in one-letter code: 5-hydroxytryptamine receptor 1F (366 aa).

The Extracellular portion of the chain corresponds to M1 to I24. N5 and N10 each carry an N-linked (GlcNAc...) asparagine glycan. Residues L25–I49 traverse the membrane as a helical segment. At V50–N59 the chain is on the cytoplasmic side. The chain crosses the membrane as a helical span at residues Y60–I81. The Extracellular portion of the chain corresponds to V82–C96. The cysteines at positions 96 and 172 are disulfide-linked. Residues D97–L119 traverse the membrane as a helical segment. D103 and C107 together coordinate serotonin. A DRY motif; important for ligand-induced conformation changes motif is present at residues D120 to Y122. The Cytoplasmic segment spans residues D120–H139. The chain crosses the membrane as a helical span at residues A140–L159. Residues F160 to H178 lie on the Extracellular side of the membrane. Residues I179–Y202 traverse the membrane as a helical segment. The Cytoplasmic segment spans residues K203–A291. The helical transmembrane segment at A292–V315 threads the bilayer. Residues V316–E327 are Extracellular-facing. Residues M328 to F350 traverse the membrane as a helical segment. The short motif at N343–Y347 is the NPxxY motif; important for ligand-induced conformation changes and signaling element. The Cytoplasmic segment spans residues N351 to C366.

This sequence belongs to the G-protein coupled receptor 1 family.

It is found in the cell membrane. G-protein coupled receptor for 5-hydroxytryptamine (serotonin). Also functions as a receptor for various alkaloids and psychoactive substances. Receptor for lasmiditan, a drug for the treatment of acute migraine. Ligand binding causes a conformation change that triggers signaling via guanine nucleotide-binding proteins (G proteins) and modulates the activity of downstream effectors, such as adenylate cyclase. HTR1F is coupled to G(i)/G(o) G alpha proteins and mediates inhibitory neurotransmission by inhibiting adenylate cyclase activity. In Homo sapiens (Human), this protein is 5-hydroxytryptamine receptor 1F.